The chain runs to 591 residues: V-type ATP synthase alpha chain (591 aa).

242–249 (GPFGAGKT) provides a ligand contact to ATP.

Belongs to the ATPase alpha/beta chains family.

The catalysed reaction is ATP + H2O + 4 H(+)(in) = ADP + phosphate + 5 H(+)(out). Produces ATP from ADP in the presence of a proton gradient across the membrane. The V-type alpha chain is a catalytic subunit. The protein is V-type ATP synthase alpha chain (atpA) of Chlamydia muridarum (strain MoPn / Nigg).